The chain runs to 68 residues: Elastase inhibitor AFLEI (68 aa).

A disulfide bridge links Cys-5 with Cys-67.

It localises to the secreted. Elastase inhibitor. Inhibitor of A.flavus elastase with a Ki of 40 nM. Inhibitor of A.fumigatus elastase and human leukocyte elastase. Inhibits the fibrinogenase and collagenase activities of A.flavus elastase. Does not inhibit porcine pancreatic elastase, trypsin, chymotrypsin, thrombin or A.acutus AC1-proteinase. This is Elastase inhibitor AFLEI from Aspergillus flavus.